Consider the following 1379-residue polypeptide: DNA-directed RNA polymerase subunit beta (1379 aa).

It belongs to the RNA polymerase beta chain family. As to quaternary structure, the RNAP catalytic core consists of 2 alpha, 1 beta, 1 beta' and 1 omega subunit. When a sigma factor is associated with the core the holoenzyme is formed, which can initiate transcription.

It carries out the reaction RNA(n) + a ribonucleoside 5'-triphosphate = RNA(n+1) + diphosphate. Functionally, DNA-dependent RNA polymerase catalyzes the transcription of DNA into RNA using the four ribonucleoside triphosphates as substrates. The chain is DNA-directed RNA polymerase subunit beta from Allorhizobium ampelinum (strain ATCC BAA-846 / DSM 112012 / S4) (Agrobacterium vitis (strain S4)).